The primary structure comprises 243 residues: uncharacterized protein (243 aa).

This is an uncharacterized protein from Caenorhabditis elegans.